Consider the following 898-residue polypeptide: Dipeptidyl peptidase 8 (898 aa).

Active-site charge relay system residues include serine 755, aspartate 833, and histidine 865.

The protein belongs to the peptidase S9B family. DPPIV subfamily. In terms of assembly, homodimer. Forms a ternary complex with NLRP1, composed of a DPP8 homodimer, one full-length NLRP1 protein, and one cleaved C-terminus of NLRP1 (NACHT, LRR and PYD domains-containing protein 1, C-terminus). Forms a ternary complex with CARD8, composed of a DPP8 homodimer, one full-length NLRP1 protein, and one cleaved C-terminus of CARD8 (Caspase recruitment domain-containing protein 8, C-terminus). In the ternary complex, only one subunit of the DPP8 homodimer is bound to NLRP1 or CARD8. In terms of tissue distribution, ubiquitously expressed, with highest levels in testis, placenta, prostate, muscle and brain.

It is found in the cytoplasm. The catalysed reaction is Release of an N-terminal dipeptide, Xaa-Yaa-|-Zaa-, from a polypeptide, preferentially when Yaa is Pro, provided Zaa is neither Pro nor hydroxyproline.. Inhibited by zinc. Inhibited by the serine proteinase inhibitor 4-(2-aminoethyl)benzenesulphonyl fluoride (AEBSF), and by di-isopropylfluorophosphate. Specifically inhibited by isoindoline derivatives. Inhibited by Val-boroPro (Talabostat, PT-100), a non-selective inhibitor, which triggers pyroptosis in monocytes and macrophages. Dipeptidyl peptidase that cleaves off N-terminal dipeptides from proteins having a Pro or Ala residue at position 2. Acts as a key inhibitor of caspase-1-dependent monocyte and macrophage pyroptosis in resting cells by preventing activation of NLRP1 and CARD8. Sequesters the cleaved C-terminal part of NLRP1 and CARD8, which respectively constitute the active part of the NLRP1 and CARD8 inflammasomes, in a ternary complex, thereby preventing their oligomerization and activation. The dipeptidyl peptidase activity is required to suppress NLRP1 and CARD8; however, neither NLRP1 nor CARD8 are bona fide substrates of DPP8, suggesting the existence of substrate(s) required for NLRP1 and CARD8 inhibition. The protein is Dipeptidyl peptidase 8 of Homo sapiens (Human).